Here is an 845-residue protein sequence, read N- to C-terminus: Probable inorganic carbon transporter subunit DabA (845 aa).

The interval 1-20 is disordered; it reads MPMASGDESMSARSENPVQS. Zn(2+)-binding residues include Cys345, Asp347, His516, and Cys531.

This sequence belongs to the inorganic carbon transporter (TC 9.A.2) DabA family. In terms of assembly, forms a complex with DabB. Zn(2+) serves as cofactor.

The protein resides in the cell inner membrane. Part of an energy-coupled inorganic carbon pump. In Azotobacter vinelandii (strain DJ / ATCC BAA-1303), this protein is Probable inorganic carbon transporter subunit DabA.